A 207-amino-acid polypeptide reads, in one-letter code: Small ribosomal subunit protein uS4 (207 aa).

Residues 31–52 (KAKFDSKPGQHGRTSGARTSDY) are disordered. Positions 97–157 (CRLDNVVYRM…DKSKKQARIV (61 aa)) constitute an S4 RNA-binding domain.

This sequence belongs to the universal ribosomal protein uS4 family. Part of the 30S ribosomal subunit. Contacts protein S5. The interaction surface between S4 and S5 is involved in control of translational fidelity.

One of the primary rRNA binding proteins, it binds directly to 16S rRNA where it nucleates assembly of the body of the 30S subunit. Functionally, with S5 and S12 plays an important role in translational accuracy. This Acidovorax sp. (strain JS42) protein is Small ribosomal subunit protein uS4.